The sequence spans 275 residues: MAVVKTKPTSAGRRHVVKVVSDELHKGRPYDGLLEKKSKSGGRNNNGRITTRHVGGGHRQHYRVVDFKRNKDGIAATVERLEYDPNRSANIALLKYLDGERRYIIAPRGVKVGDSLESGVNAAIKRGNALPLRNIPVGSTVHCIELKPGKGAQIARSAGASAQLVAREGNYATVRLRSGEMRKILAECRATLGEVGNSEHSLRQLGKAGAKRWRGVRPTVRGVAMNPVDHPHGGGEGRTSGGRHPVSPWGIPTKGHKTRKNKRTDKLIVRRRKAK.

The segment covering 28-38 (RPYDGLLEKKS) has biased composition (basic and acidic residues). Disordered stretches follow at residues 28–58 (RPYD…GGGH) and 223–275 (VAMN…RKAK). Positions 254-275 (KGHKTRKNKRTDKLIVRRRKAK) are enriched in basic residues.

Belongs to the universal ribosomal protein uL2 family. As to quaternary structure, part of the 50S ribosomal subunit. Forms a bridge to the 30S subunit in the 70S ribosome.

Functionally, one of the primary rRNA binding proteins. Required for association of the 30S and 50S subunits to form the 70S ribosome, for tRNA binding and peptide bond formation. It has been suggested to have peptidyltransferase activity; this is somewhat controversial. Makes several contacts with the 16S rRNA in the 70S ribosome. The polypeptide is Large ribosomal subunit protein uL2 (Chromohalobacter salexigens (strain ATCC BAA-138 / DSM 3043 / CIP 106854 / NCIMB 13768 / 1H11)).